Here is a 1199-residue protein sequence, read N- to C-terminus: Metabotropic glutamate receptor 1 (1199 aa).

The signal sequence occupies residues 1-18; it reads MVRLLLIFFPMIFLEMSI. The Extracellular segment spans residues 19–592; it reads LPRMPDRKVL…VRYLEWSDIE (574 aa). Cysteine 67 and cysteine 109 are oxidised to a cystine. Tyrosine 74 contributes to the L-glutamate binding site. Asparagine 98 is a glycosylation site (N-linked (GlcNAc...) asparagine). L-glutamate-binding positions include serine 165 and 186-188; that span reads SAT. Asparagine 223 is a glycosylation site (N-linked (GlcNAc...) asparagine). An L-glutamate-binding site is contributed by tyrosine 236. A disulfide bond links cysteine 289 and cysteine 291. Aspartate 318 provides a ligand contact to L-glutamate. Cysteines 378 and 394 form a disulfide. Asparagine 397 carries an N-linked (GlcNAc...) asparagine glycan. Lysine 409 provides a ligand contact to L-glutamate. A disulfide bridge connects residues cysteine 432 and cysteine 439. An N-linked (GlcNAc...) asparagine glycan is attached at asparagine 515. Residues 593 to 615 traverse the membrane as a helical segment; sequence SIIAIAFSCLGILVTLFVTLIFV. Topologically, residues 616 to 629 are cytoplasmic; sequence LYRDTPVVKSSSRE. The chain crosses the membrane as a helical span at residues 630-650; the sequence is LCYIILAGIFLGYVCPFTLIA. The Extracellular portion of the chain corresponds to 651–658; it reads KPTTTSCY. Residues cysteine 657 and cysteine 746 are joined by a disulfide bond. Residues 659–680 traverse the membrane as a helical segment; sequence LQRLLVGLSSAMCYSALVTKTN. The Cytoplasmic portion of the chain corresponds to 681–703; it reads RIARILAGSKKKICTRKPRFMSA. Residues 704 to 727 form a helical membrane-spanning segment; that stretch reads WAQVIIASILISVQLTLVVTLIIM. The Extracellular portion of the chain corresponds to 728 to 750; it reads EPPMPILSYPSIKEVYLICNTSN. Residues 751–772 traverse the membrane as a helical segment; it reads LGVVAPVGYNGLLIMSCTYYAF. The Cytoplasmic portion of the chain corresponds to 773–785; it reads KTRNVPANFNEAK. Residues 786–807 form a helical membrane-spanning segment; the sequence is YIAFTMYTTCIIWLAFVPIYFG. Residues 808–815 lie on the Extracellular side of the membrane; it reads SNYKIITT. A helical transmembrane segment spans residues 816 to 840; that stretch reads CFAVSLSVTVALGCMFTPKMYIIIA. Topologically, residues 841–1199 are cytoplasmic; sequence KPERNVRSAF…RDYKQSSSTL (359 aa). At serine 853 the chain carries Phosphoserine. Position 871 is a phosphothreonine (threonine 871). 3 disordered regions span residues 882–905, 959–1036, and 1056–1081; these read GAGN…QAPK, EEDN…QPKS, and HAVL…PPQH. Residues 885 to 895 are compositionally biased toward polar residues; the sequence is NANSNGKSVSW. A phosphoserine mark is found at serine 894 and serine 969. The segment covering 1012–1033 has biased composition (pro residues); that stretch reads GLPPPLPQQQPQQPPPQQPPQQ. Residue serine 1098 is modified to Phosphoserine. Residues 1120-1177 are disordered; that stretch reads EREGNTEEDELEEEEDLPTASKLTPEDSPALTPPSPFRDSVASGSSVPSSPVSESVLC. Over residues 1125–1136 the composition is skewed to acidic residues; it reads TEEDELEEEEDL. Phosphoserine is present on serine 1147. Threonine 1151 is modified (phosphothreonine). At serine 1154 the chain carries Phosphoserine. A compositionally biased stretch (low complexity) spans 1159 to 1175; it reads SVASGSSVPSSPVSESV.

The protein belongs to the G-protein coupled receptor 3 family. In terms of assembly, homodimer; disulfide-linked. The PPXXF motif binds HOMER1, HOMER2 and HOMER3. Interacts with TAMALIN. Interacts with RYR1, RYR2, ITPR1, SHANK1 and SHANK3. Interacts with SIAH1. Predominantly expressed in cerebellar Purkinje cells, CA2-CA3 pyramidal cells of the hippocampus, and mitral and tufted cells of the olfactory bulb.

The protein localises to the cell membrane. The protein resides in the postsynaptic cell membrane. Its subcellular location is the cell projection. It localises to the dendrite. G-protein coupled receptor for glutamate. Ligand binding causes a conformation change that triggers signaling via guanine nucleotide-binding proteins (G proteins) and modulates the activity of down-stream effectors. Signaling activates a phosphatidylinositol-calcium second messenger system. May participate in the central action of glutamate in the CNS, such as long-term potentiation in the hippocampus and long-term depression in the cerebellum. May function in the light response in the retina. Induces GRID1 and GRID2 cation-channel activation via GNAQ-PLC-PKC pathway in dopaminergic neurons and cerebellar Purkinje cell, respectively. This Rattus norvegicus (Rat) protein is Metabotropic glutamate receptor 1 (Grm1).